Here is a 454-residue protein sequence, read N- to C-terminus: uncharacterized protein (454 aa).

In terms of domain architecture, TRAM spans 1-45 (MAAEGKAIAKVNDLVIFVPYVVPGDVVDLQIKRKKNKYAEAEAVK). [4Fe-4S] cluster is bound by residues Cys58, Cys64, Cys67, and Cys160. Gln286, Tyr315, Glu336, and Asp385 together coordinate S-adenosyl-L-methionine. Cys412 (nucleophile) is an active-site residue.

Belongs to the class I-like SAM-binding methyltransferase superfamily. RNA M5U methyltransferase family.

This is an uncharacterized protein from Bacteroides thetaiotaomicron (strain ATCC 29148 / DSM 2079 / JCM 5827 / CCUG 10774 / NCTC 10582 / VPI-5482 / E50).